The sequence spans 174 residues: Large ribosomal subunit protein uL10 (174 aa).

Belongs to the universal ribosomal protein uL10 family. As to quaternary structure, part of the ribosomal stalk of the 50S ribosomal subunit. The N-terminus interacts with L11 and the large rRNA to form the base of the stalk. The C-terminus forms an elongated spine to which L12 dimers bind in a sequential fashion forming a multimeric L10(L12)X complex.

Forms part of the ribosomal stalk, playing a central role in the interaction of the ribosome with GTP-bound translation factors. This is Large ribosomal subunit protein uL10 from Coxiella burnetii (strain CbuK_Q154) (Coxiella burnetii (strain Q154)).